Reading from the N-terminus, the 1438-residue chain is DNA-directed RNA polymerase subunit beta' (1438 aa).

Residues cysteine 70, cysteine 72, cysteine 85, and cysteine 88 each coordinate Zn(2+). Residues aspartate 461, aspartate 463, and aspartate 465 each coordinate Mg(2+). Positions 821, 895, 902, and 905 each coordinate Zn(2+). Positions 1413–1427 (DAMAAAMGGDSAGGD) are enriched in low complexity. The disordered stretch occupies residues 1413–1438 (DAMAAAMGGDSAGGDTKPEAPEASEE).

It belongs to the RNA polymerase beta' chain family. The RNAP catalytic core consists of 2 alpha, 1 beta, 1 beta' and 1 omega subunit. When a sigma factor is associated with the core the holoenzyme is formed, which can initiate transcription. It depends on Mg(2+) as a cofactor. The cofactor is Zn(2+).

The enzyme catalyses RNA(n) + a ribonucleoside 5'-triphosphate = RNA(n+1) + diphosphate. Functionally, DNA-dependent RNA polymerase catalyzes the transcription of DNA into RNA using the four ribonucleoside triphosphates as substrates. The polypeptide is DNA-directed RNA polymerase subunit beta' (Erythrobacter litoralis (strain HTCC2594)).